Here is a 295-residue protein sequence, read N- to C-terminus: GTPase Era (295 aa).

One can recognise an Era-type G domain in the interval 5–172; that stretch reads YCGYAAIIGR…EQAVHQLMPE (168 aa). Positions 13–20 are G1; that stretch reads GRPNVGKS. Residue 13–20 coordinates GTP; sequence GRPNVGKS. The tract at residues 39-43 is G2; it reads QTTRY. Residues 60-63 form a G3 region; it reads DTPG. GTP-binding positions include 60–64 and 121–124; these read DTPGL and NKVD. Residues 121–124 are G4; sequence NKVD. The interval 151 to 153 is G5; the sequence is LSA. Positions 203–279 constitute a KH type-2 domain; that stretch reads LGQEIPYSLA…FLQLWVKVKS (77 aa).

Belongs to the TRAFAC class TrmE-Era-EngA-EngB-Septin-like GTPase superfamily. Era GTPase family. As to quaternary structure, monomer.

It localises to the cytoplasm. The protein localises to the cell inner membrane. Its function is as follows. An essential GTPase that binds both GDP and GTP, with rapid nucleotide exchange. Plays a role in 16S rRNA processing and 30S ribosomal subunit biogenesis and possibly also in cell cycle regulation and energy metabolism. This is GTPase Era from Coxiella burnetii (strain CbuK_Q154) (Coxiella burnetii (strain Q154)).